The following is a 179-amino-acid chain: Large ribosomal subunit protein uL6 (179 aa).

Belongs to the universal ribosomal protein uL6 family. In terms of assembly, part of the 50S ribosomal subunit.

In terms of biological role, this protein binds to the 23S rRNA, and is important in its secondary structure. It is located near the subunit interface in the base of the L7/L12 stalk, and near the tRNA binding site of the peptidyltransferase center. The sequence is that of Large ribosomal subunit protein uL6 from Nocardioides sp. (strain ATCC BAA-499 / JS614).